A 131-amino-acid chain; its full sequence is Large ribosomal subunit protein bL17 (131 aa).

The protein belongs to the bacterial ribosomal protein bL17 family. Part of the 50S ribosomal subunit. Contacts protein L32.

This chain is Large ribosomal subunit protein bL17, found in Finegoldia magna (strain ATCC 29328 / DSM 20472 / WAL 2508) (Peptostreptococcus magnus).